The following is a 650-amino-acid chain: Chaperone protein DnaK (650 aa).

Threonine 200 bears the Phosphothreonine; by autocatalysis mark. A compositionally biased stretch (low complexity) spans 612-636 (QQAGAAGAAGAAEGAAHAGGAQQAA). The segment at 612–650 (QQAGAAGAAGAAEGAAHAGGAQQAADDVVDAEFKEVKKD) is disordered.

This sequence belongs to the heat shock protein 70 family.

Acts as a chaperone. This Burkholderia ambifaria (strain ATCC BAA-244 / DSM 16087 / CCUG 44356 / LMG 19182 / AMMD) (Burkholderia cepacia (strain AMMD)) protein is Chaperone protein DnaK.